Consider the following 638-residue polypeptide: Cytoplasmic dynein 1 intermediate chain 2 (638 aa).

Composition is skewed to basic and acidic residues over residues 1 to 13 (MSDK…ELER) and 20 to 43 (QIRE…KKEA). Disordered stretches follow at residues 1–135 (MSDK…GRGP) and 155–214 (TYTK…EEKQ). Position 2 is an N-acetylserine (S2). The residue at position 51 (S51) is a Diphosphoserine. Phosphoserine occurs at positions 51, 73, 81, 84, and 90. Over residues 88-97 (PSSKSVSTPS) the composition is skewed to low complexity. Position 95 is a phosphothreonine (T95). 3 positions are modified to phosphoserine: S97, S101, and S104. A compositionally biased stretch (basic and acidic residues) spans 190–214 (EKTLKKDEENDSKAPPHELTEEEKQ). WD repeat units lie at residues 277-326 (SKHR…TTPE), 330-370 (HCQS…RTPV), 379-420 (AHTH…HPQD), 429-469 (SKAV…AGIS), 474-519 (GHQG…PLYS), 522-562 (DNAD…EVPT), and 568-607 (EGNP…AVPR).

The protein belongs to the dynein intermediate chain family. In terms of assembly, homodimer. The cytoplasmic dynein 1 complex consists of two catalytic heavy chains (HCs) and a number of non-catalytic subunits presented by intermediate chains (ICs), light intermediate chains (LICs) and light chains (LCs); the composition seems to vary in respect to the IC, LIC and LC composition. The heavy chain homodimer serves as a scaffold for the probable homodimeric assembly of the respective non-catalytic subunits. The ICs and LICs bind directly to the HC dimer and the LCs assemble on the IC dimer. Interacts with DYNLT3. Interacts with DYNLT1. Interacts (dephosphorylated at Ser-90) with DCTN1. Interacts with BICD2. Interacts with SPEF2. Interacts with CFAP61. As to quaternary structure, (Microbial infection) Interacts with human adenovirus 5 hexon protein; this interaction probably allows virus intracellular transport. In terms of processing, the phosphorylation status of Ser-90 appears to be involved in dynactin-dependent target binding. Pyrophosphorylation by 5-diphosphoinositol pentakisphosphate (5-IP7) promotes interaction with DCTN1. Serine pyrophosphorylation is achieved by Mg(2+)-dependent, but enzyme independent transfer of a beta-phosphate from a inositol pyrophosphate to a pre-phosphorylated serine residue.

The protein resides in the cytoplasm. It is found in the cytoskeleton. In terms of biological role, acts as one of several non-catalytic accessory components of the cytoplasmic dynein 1 complex that are thought to be involved in linking dynein to cargos and to adapter proteins that regulate dynein function. Cytoplasmic dynein 1 acts as a motor for the intracellular retrograde motility of vesicles and organelles along microtubules. The intermediate chains mediate the binding of dynein to dynactin via its 150 kDa component (p150-glued) DCTN1. Involved in membrane-transport, such as Golgi apparatus, late endosomes and lysosomes. The sequence is that of Cytoplasmic dynein 1 intermediate chain 2 from Homo sapiens (Human).